The chain runs to 116 residues: Ribonuclease P protein component (116 aa).

The protein belongs to the RnpA family. In terms of assembly, consists of a catalytic RNA component (M1 or rnpB) and a protein subunit.

It catalyses the reaction Endonucleolytic cleavage of RNA, removing 5'-extranucleotides from tRNA precursor.. Functionally, RNaseP catalyzes the removal of the 5'-leader sequence from pre-tRNA to produce the mature 5'-terminus. It can also cleave other RNA substrates such as 4.5S RNA. The protein component plays an auxiliary but essential role in vivo by binding to the 5'-leader sequence and broadening the substrate specificity of the ribozyme. In Leuconostoc citreum (strain KM20), this protein is Ribonuclease P protein component.